The chain runs to 54 residues: Phorbol-12-myristate-13-acetate-induced protein 1 (54 aa).

The short motif at 29 to 37 (LRRFGDKLN) is the BH3 element. The interval 41 to 50 (KLLNLISKLF) is required for mitochondrial location.

It belongs to the PMAIP1 family. As to quaternary structure, interacts with MCL1. Interacts with BCL2A1. Interacts with BAX. Interacts with BCL2L10. In terms of tissue distribution, highly expressed in adult T-cell leukemia cell line.

It is found in the mitochondrion. Its function is as follows. Promotes activation of caspases and apoptosis. Promotes mitochondrial membrane changes and efflux of apoptogenic proteins from the mitochondria. Contributes to p53/TP53-dependent apoptosis after radiation exposure. Promotes proteasomal degradation of MCL1. Competes with BAK1 for binding to MCL1 and can displace BAK1 from its binding site on MCL1. Competes with BIM/BCL2L11 for binding to MCL1 and can displace BIM/BCL2L11 from its binding site on MCL1. The chain is Phorbol-12-myristate-13-acetate-induced protein 1 (PMAIP1) from Homo sapiens (Human).